Here is a 238-residue protein sequence, read N- to C-terminus: Ribonuclease PH (238 aa).

Phosphate is bound by residues Arg-87 and 125 to 127 (GTR).

It belongs to the RNase PH family. Homohexameric ring arranged as a trimer of dimers.

The enzyme catalyses tRNA(n+1) + phosphate = tRNA(n) + a ribonucleoside 5'-diphosphate. In terms of biological role, phosphorolytic 3'-5' exoribonuclease that plays an important role in tRNA 3'-end maturation. Removes nucleotide residues following the 3'-CCA terminus of tRNAs; can also add nucleotides to the ends of RNA molecules by using nucleoside diphosphates as substrates, but this may not be physiologically important. Probably plays a role in initiation of 16S rRNA degradation (leading to ribosome degradation) during starvation. This chain is Ribonuclease PH, found in Synechococcus elongatus (strain ATCC 33912 / PCC 7942 / FACHB-805) (Anacystis nidulans R2).